A 316-amino-acid polypeptide reads, in one-letter code: Methionyl-tRNA formyltransferase (316 aa).

Ser112 to Pro115 provides a ligand contact to (6S)-5,6,7,8-tetrahydrofolate.

This sequence belongs to the Fmt family.

It catalyses the reaction L-methionyl-tRNA(fMet) + (6R)-10-formyltetrahydrofolate = N-formyl-L-methionyl-tRNA(fMet) + (6S)-5,6,7,8-tetrahydrofolate + H(+). Attaches a formyl group to the free amino group of methionyl-tRNA(fMet). The formyl group appears to play a dual role in the initiator identity of N-formylmethionyl-tRNA by promoting its recognition by IF2 and preventing the misappropriation of this tRNA by the elongation apparatus. In Glaesserella parasuis serovar 5 (strain SH0165) (Haemophilus parasuis), this protein is Methionyl-tRNA formyltransferase.